Here is a 322-residue protein sequence, read N- to C-terminus: Major serine/threonine-protein phosphatase PP2A-2 catalytic subunit (322 aa).

The Mn(2+) site is built by Asp-70, His-72, Asp-98, and Asn-130. Residue His-131 is the Proton donor of the active site. The Mn(2+) site is built by His-180 and His-254. Leucine methyl ester is present on Leu-322.

Belongs to the PPP phosphatase family. PP-2A subfamily. Mn(2+) serves as cofactor.

It carries out the reaction O-phospho-L-seryl-[protein] + H2O = L-seryl-[protein] + phosphate. The catalysed reaction is O-phospho-L-threonyl-[protein] + H2O = L-threonyl-[protein] + phosphate. Functionally, essential role in cell cycle control. PP2A may be involved in controlling the entry into mitosis, possibly acting as an inhibitor. The protein is Major serine/threonine-protein phosphatase PP2A-2 catalytic subunit (ppa2) of Schizosaccharomyces pombe (strain 972 / ATCC 24843) (Fission yeast).